Consider the following 86-residue polypeptide: Small ribosomal subunit protein bS16 (86 aa).

It belongs to the bacterial ribosomal protein bS16 family.

This Leptothrix cholodnii (strain ATCC 51168 / LMG 8142 / SP-6) (Leptothrix discophora (strain SP-6)) protein is Small ribosomal subunit protein bS16.